Here is a 251-residue protein sequence, read N- to C-terminus: uncharacterized protein (251 aa).

Transmembrane regions (helical) follow at residues 48–68, 88–108, 110–130, 132–152, 158–178, 184–204, and 209–229; these read WMVG…VELI, VLWG…LVAN, IPLL…FIWV, AMVW…GSSF, IGVS…GLFV, IIGC…MPVL, and GVSW…AYLL.

It to M.tuberculosis Rv1337.

The protein localises to the cell membrane. This is an uncharacterized protein from Mycobacterium leprae (strain TN).